Reading from the N-terminus, the 314-residue chain is Ribosomal RNA small subunit methyltransferase H (314 aa).

Residues 36 to 38, aspartate 56, phenylalanine 82, aspartate 104, and glutamine 111 each bind S-adenosyl-L-methionine; that span reads GGH.

It belongs to the methyltransferase superfamily. RsmH family.

It is found in the cytoplasm. It carries out the reaction cytidine(1402) in 16S rRNA + S-adenosyl-L-methionine = N(4)-methylcytidine(1402) in 16S rRNA + S-adenosyl-L-homocysteine + H(+). Specifically methylates the N4 position of cytidine in position 1402 (C1402) of 16S rRNA. In Ectopseudomonas mendocina (strain ymp) (Pseudomonas mendocina), this protein is Ribosomal RNA small subunit methyltransferase H.